Consider the following 197-residue polypeptide: uncharacterized protein (197 aa).

A helical transmembrane segment spans residues 7–27 (PISVGQMVLICIFILIILFVI).

It belongs to the IIV-6 307L family.

It is found in the membrane. This is an uncharacterized protein from Acheta domesticus (House cricket).